The chain runs to 136 residues: ATP synthase epsilon chain (136 aa).

Belongs to the ATPase epsilon chain family. In terms of assembly, F-type ATPases have 2 components, CF(1) - the catalytic core - and CF(0) - the membrane proton channel. CF(1) has five subunits: alpha(3), beta(3), gamma(1), delta(1), epsilon(1). CF(0) has three main subunits: a, b and c.

The protein resides in the cell inner membrane. Its function is as follows. Produces ATP from ADP in the presence of a proton gradient across the membrane. The polypeptide is ATP synthase epsilon chain (Agrobacterium fabrum (strain C58 / ATCC 33970) (Agrobacterium tumefaciens (strain C58))).